The following is a 1039-amino-acid chain: Probable inorganic carbon transporter subunit DabA 1 (1039 aa).

Residues Cys462, Asp464, His721, and Cys736 each contribute to the Zn(2+) site.

Belongs to the inorganic carbon transporter (TC 9.A.2) DabA family. In terms of assembly, forms a complex with DabB. Requires Zn(2+) as cofactor.

Its subcellular location is the cell inner membrane. Functionally, part of an energy-coupled inorganic carbon pump. This chain is Probable inorganic carbon transporter subunit DabA 1, found in Nitrobacter hamburgensis (strain DSM 10229 / NCIMB 13809 / X14).